The sequence spans 201 residues: Small ribosomal subunit protein uS4c (201 aa).

A disordered region spans residues 15-44; that stretch reads LGALPGLTNKRPRAGSDLRNQSRSGKKSQY. In terms of domain architecture, S4 RNA-binding spans 89-149; it reads MRLDNILFRL…DEQNSRALIQ (61 aa).

Belongs to the universal ribosomal protein uS4 family. In terms of assembly, part of the 30S ribosomal subunit. Contacts protein S5. The interaction surface between S4 and S5 is involved in control of translational fidelity.

The protein resides in the plastid. It localises to the chloroplast. Its function is as follows. One of the primary rRNA binding proteins, it binds directly to 16S rRNA where it nucleates assembly of the body of the 30S subunit. In terms of biological role, with S5 and S12 plays an important role in translational accuracy. The protein is Small ribosomal subunit protein uS4c (rps4) of Daucus carota (Wild carrot).